The following is a 148-amino-acid chain: Hut operon positive regulatory protein (148 aa).

It belongs to the HutP family. In terms of assembly, homohexamer.

In terms of biological role, antiterminator that binds to cis-acting regulatory sequences on the mRNA in the presence of histidine, thereby suppressing transcription termination and activating the hut operon for histidine utilization. The chain is Hut operon positive regulatory protein from Bacillus velezensis (strain DSM 23117 / BGSC 10A6 / LMG 26770 / FZB42) (Bacillus amyloliquefaciens subsp. plantarum).